The primary structure comprises 154 residues: Superoxide dismutase [Cu-Zn] (154 aa).

A Glycyl lysine isopeptide (Lys-Gly) (interchain with G-Cter in SUMO) cross-link involves residue lysine 19. A phosphoserine mark is found at serine 26 and serine 39. Glutamate 43 serves as a coordination point for Zn(2+). Cu cation-binding residues include histidine 47, histidine 49, and histidine 64. Residues cysteine 58 and cysteine 147 are joined by a disulfide bond. Histidine 64 serves as a coordination point for Zn(2+). Residue lysine 70 forms a Glycyl lysine isopeptide (Lys-Gly) (interchain with G-Cter in SUMO) linkage. Residues histidine 72, histidine 81, and aspartate 84 each coordinate Zn(2+). Phosphoserine occurs at positions 99 and 117. Cu cation is bound at residue histidine 121. Residues threonine 132 and threonine 138 each carry the phosphothreonine modification. Arginine 144 is a substrate binding site.

The protein belongs to the Cu-Zn superoxide dismutase family. As to quaternary structure, homodimer in holo form. In apo form, heterodimer with CCS1. Zinc-binding at 'His-16' of CCS1 and Glu-43 of apo-SOD1 is required for this heterodimerization. Cu cation is required as a cofactor. The cofactor is Zn(2+).

It localises to the cytoplasm. The protein resides in the mitochondrion intermembrane space. The catalysed reaction is 2 superoxide + 2 H(+) = H2O2 + O2. In terms of biological role, destroys radicals which are normally produced within the cells and which are toxic to biological systems. The protein is Superoxide dismutase [Cu-Zn] of Saccharomyces cerevisiae (strain ATCC 204508 / S288c) (Baker's yeast).